The primary structure comprises 65 residues: Large ribosomal subunit protein bL32 (65 aa).

Positions 1–18 are enriched in basic residues; that stretch reads MAVPKRRHSKSRTRKRRS. The disordered stretch occupies residues 1-20; sequence MAVPKRRHSKSRTRKRRSTY.

The protein belongs to the bacterial ribosomal protein bL32 family.

This is Large ribosomal subunit protein bL32 from Salinibacter ruber (strain DSM 13855 / M31).